The primary structure comprises 497 residues: Peptidoglycan endopeptidase RipA (497 aa).

An N-terminal signal peptide occupies residues 1–39 (MRRTVRALATRVHGRVCAVPLVVGMLLATALYGGGPAAA). The span at 177-192 (ARLAKEKADQAARDAE) shows a compositional bias: basic and acidic residues. 2 disordered regions span residues 177–198 (ARLA…QDNA) and 253–297 (APAA…GQNW). Positions 255-273 (AAAPAPVPNSAPAPVPGAQ) are enriched in pro residues. In terms of domain architecture, NlpC/P60 spans 365 to 497 (REAVEYVIRR…TPYVTRLIEY (133 aa)). Cys408 (nucleophile) is an active-site residue. His457 functions as the Proton acceptor in the catalytic mechanism. Residue Glu469 is part of the active site.

The protein belongs to the peptidase C40 family. In terms of assembly, monomer.

Its subcellular location is the secreted. Functionally, peptidoglycan endopeptidase that cleaves the bond between D-glutamate and meso-diaminopimelate. Binds and degrades high-molecular weight peptidoglycan. Required for normal separation of daughter cells after cell division and for cell wall integrity. This chain is Peptidoglycan endopeptidase RipA (ripA), found in Mycolicibacterium smegmatis (strain ATCC 700084 / mc(2)155) (Mycobacterium smegmatis).